A 60-amino-acid polypeptide reads, in one-letter code: UPF0337 protein asr1134 (60 aa).

Composition is skewed to basic and acidic residues over residues M1 to A18 and P29 to D60. Positions M1–D60 are disordered.

Belongs to the UPF0337 (CsbD) family.

This is UPF0337 protein asr1134 from Nostoc sp. (strain PCC 7120 / SAG 25.82 / UTEX 2576).